A 238-amino-acid polypeptide reads, in one-letter code: Lactate utilization protein A (238 aa).

It belongs to the LutA/YkgE family.

Functionally, is involved in L-lactate degradation and allows cells to grow with lactate as the sole carbon source. This is Lactate utilization protein A from Bacillus licheniformis (strain ATCC 14580 / DSM 13 / JCM 2505 / CCUG 7422 / NBRC 12200 / NCIMB 9375 / NCTC 10341 / NRRL NRS-1264 / Gibson 46).